A 23-amino-acid polypeptide reads, in one-letter code: MWTKPSFTDLRLGFEVTLYFANR.

The segment at residues 15–19 (EVTLY) is a cross-link (pyrroloquinoline quinone (Glu-Tyr)).

Belongs to the PqqA family.

It participates in cofactor biosynthesis; pyrroloquinoline quinone biosynthesis. In terms of biological role, required for coenzyme pyrroloquinoline quinone (PQQ) biosynthesis. PQQ is probably formed by cross-linking a specific glutamate to a specific tyrosine residue and excising these residues from the peptide. The protein is Coenzyme PQQ synthesis protein A of Pseudomonas aeruginosa (strain UCBPP-PA14).